The following is an 82-amino-acid chain: Sec-independent protein translocase protein TatA (82 aa).

A helical membrane pass occupies residues 1–21 (MGGISIWQLLIIAVIIVLLFG). A disordered region spans residues 48-82 (PAKEAKKDADFVPQNLEKKEAETVEKQKQNDKEQA).

It belongs to the TatA/E family. In terms of assembly, the Tat system comprises two distinct complexes: a TatABC complex, containing multiple copies of TatA, TatB and TatC subunits, and a separate TatA complex, containing only TatA subunits. Substrates initially bind to the TatABC complex, which probably triggers association of the separate TatA complex to form the active translocon.

It localises to the cell inner membrane. Part of the twin-arginine translocation (Tat) system that transports large folded proteins containing a characteristic twin-arginine motif in their signal peptide across membranes. TatA could form the protein-conducting channel of the Tat system. This Aliivibrio fischeri (strain ATCC 700601 / ES114) (Vibrio fischeri) protein is Sec-independent protein translocase protein TatA.